Here is a 132-residue protein sequence, read N- to C-terminus: uncharacterized protein (132 aa).

The interval 107–132 (LNTFSGSGQKHSQPGSGQHPFSFRKD) is disordered. Residues 108–122 (NTFSGSGQKHSQPGS) are compositionally biased toward polar residues.

This is an uncharacterized protein from Bacillus subtilis (strain 168).